Reading from the N-terminus, the 173-residue chain is Alpha-crystallin A chain (173 aa).

The residue at position 1 (methionine 1) is an N-acetylmethionine. One can recognise a sHSP domain in the interval 52–162 (LFRSVLESGI…SHSERPIPVS (111 aa)). Residues histidine 100, glutamate 102, histidine 107, and histidine 154 each contribute to the Zn(2+) site. Positions 142 to 173 (SGPKVPSNMDPSHSERPIPVSREEKPTSAPSS) are disordered. Basic and acidic residues predominate over residues 153–167 (SHSERPIPVSREEKP). Serine 162 carries O-linked (GlcNAc) serine glycosylation.

It belongs to the small heat shock protein (HSP20) family. As to quaternary structure, heteropolymer composed of three CRYAA and one CRYAB subunits. Inter-subunit bridging via zinc ions enhances stability, which is crucial as there is no protein turn over in the lens. Can also form homodimers and homotetramers (dimers of dimers) which serve as the building blocks of homooligomers. Within homooligomers, the zinc-binding motif is created from residues of 3 different molecules. His-100 and Glu-102 from one molecule are ligands of the zinc ion, and His-107 and His-154 residues from additional molecules complete the site with tetrahedral coordination geometry.

The protein localises to the cytoplasm. Its subcellular location is the nucleus. Its function is as follows. Contributes to the transparency and refractive index of the lens. May act as a chaperone, preventing aggregation of various proteins under a wide range of stress conditions. The polypeptide is Alpha-crystallin A chain (CRYAA) (Gallus gallus (Chicken)).